A 352-amino-acid chain; its full sequence is Uroporphyrinogen decarboxylase (352 aa).

Residues 26–30 (RQAGR), Asp-76, Tyr-153, Ser-208, and His-323 each bind substrate.

Belongs to the uroporphyrinogen decarboxylase family. Homodimer.

It is found in the cytoplasm. The enzyme catalyses uroporphyrinogen III + 4 H(+) = coproporphyrinogen III + 4 CO2. It participates in porphyrin-containing compound metabolism; protoporphyrin-IX biosynthesis; coproporphyrinogen-III from 5-aminolevulinate: step 4/4. Catalyzes the decarboxylation of four acetate groups of uroporphyrinogen-III to yield coproporphyrinogen-III. In Prochlorococcus marinus (strain NATL1A), this protein is Uroporphyrinogen decarboxylase.